A 141-amino-acid chain; its full sequence is Large ribosomal subunit protein uL11 (141 aa).

This sequence belongs to the universal ribosomal protein uL11 family. In terms of assembly, part of the ribosomal stalk of the 50S ribosomal subunit. Interacts with L10 and the large rRNA to form the base of the stalk. L10 forms an elongated spine to which L12 dimers bind in a sequential fashion forming a multimeric L10(L12)X complex. Post-translationally, one or more lysine residues are methylated.

Its function is as follows. Forms part of the ribosomal stalk which helps the ribosome interact with GTP-bound translation factors. The protein is Large ribosomal subunit protein uL11 of Streptococcus equi subsp. equi (strain 4047).